The following is a 353-amino-acid chain: Probable peptide ABC transporter ATP-binding protein y4tS (353 aa).

An ABC transporter domain is found at 6–256; the sequence is LKVESLTKHY…PVHPYTEALI (251 aa). 49-56 provides a ligand contact to ATP; it reads GESGCGKS.

It belongs to the ABC transporter superfamily.

It is found in the cell inner membrane. In terms of biological role, probably part of a binding-protein-dependent transport system y4tOPQRS for a peptide. Probably responsible for energy coupling to the transport system. The chain is Probable peptide ABC transporter ATP-binding protein y4tS from Sinorhizobium fredii (strain NBRC 101917 / NGR234).